The chain runs to 219 residues: MKKSQYFIVFICFFVLFSVHPIAAAAADSDNSTVNEWFQKKDEKTADQSEQKKEKTTKTADETEGAAAPSVSAFDFVKMIFALLFVIVLIYGLVKLMNKRNRLLKPFQYVENIGGTSVGQNRSIQLIKVGKSVLVVGVGETIQLLKEIEDEKEIEVILSQHEEAMSSKIEWQKFVKPLKSSEHQPQQKLPSFSKALKEQLEELKQNRSEGKKKGPRHHE.

An N-terminal signal peptide occupies residues 1–26 (MKKSQYFIVFICFFVLFSVHPIAAAA). Residues 41-61 (KDEKTADQSEQKKEKTTKTAD) show a composition bias toward basic and acidic residues. The tract at residues 41–62 (KDEKTADQSEQKKEKTTKTADE) is disordered. The chain crosses the membrane as a helical span at residues 71-96 (VSAFDFVKMIFALLFVIVLIYGLVKL). The span at 200–212 (LEELKQNRSEGKK) shows a compositional bias: basic and acidic residues. The segment at 200-219 (LEELKQNRSEGKKKGPRHHE) is disordered.

The protein localises to the cell membrane. Its function is as follows. May be a structural component of the flagellum that anchors the rod to the membrane. In Bacillus subtilis (strain 168), this protein is Flagellar biosynthetic protein FliZ (fliZ).